The chain runs to 487 residues: 7-deoxyloganetin glucosyltransferase (487 aa).

H25 functions as the Proton acceptor in the catalytic mechanism. An an anthocyanidin-binding site is contributed by H25. The active-site Charge relay is the D129. The UDP-alpha-D-glucose site is built by T151, Q366, H381, W384, N385, S386, and E389. A404 provides a ligand contact to an anthocyanidin. The UDP-alpha-D-glucose site is built by E405 and Q406.

The protein belongs to the UDP-glycosyltransferase family. In terms of tissue distribution, expressed in roots.

The catalysed reaction is 7-deoxyloganetin + UDP-alpha-D-glucose = 7-deoxyloganin + UDP + H(+). Its function is as follows. Iridoid glucosyltransferase acting exclusively on 7-deoxyloganetin. No activity with 7-deoxyloganetic acid. The protein is 7-deoxyloganetin glucosyltransferase (UGT85A23) of Catharanthus roseus (Madagascar periwinkle).